A 1397-amino-acid polypeptide reads, in one-letter code: DNA-directed RNA polymerase subunit beta (1397 aa).

Belongs to the RNA polymerase beta chain family. The RNAP catalytic core consists of 2 alpha, 1 beta, 1 beta' and 1 omega subunit. When a sigma factor is associated with the core the holoenzyme is formed, which can initiate transcription.

The enzyme catalyses RNA(n) + a ribonucleoside 5'-triphosphate = RNA(n+1) + diphosphate. In terms of biological role, DNA-dependent RNA polymerase catalyzes the transcription of DNA into RNA using the four ribonucleoside triphosphates as substrates. The polypeptide is DNA-directed RNA polymerase subunit beta (Rhodospirillum centenum (strain ATCC 51521 / SW)).